The primary structure comprises 210 residues: dITP/XTP pyrophosphatase (210 aa).

Ser16–Lys21 lines the substrate pocket. The active-site Proton acceptor is Asp79. Asp79 provides a ligand contact to Mg(2+). Residues Ser80, Phe166–Asp169, Lys189, and His194–Arg195 each bind substrate.

The protein belongs to the HAM1 NTPase family. Homodimer. The cofactor is Mg(2+).

It carries out the reaction XTP + H2O = XMP + diphosphate + H(+). The enzyme catalyses dITP + H2O = dIMP + diphosphate + H(+). The catalysed reaction is ITP + H2O = IMP + diphosphate + H(+). Functionally, pyrophosphatase that catalyzes the hydrolysis of nucleoside triphosphates to their monophosphate derivatives, with a high preference for the non-canonical purine nucleotides XTP (xanthosine triphosphate), dITP (deoxyinosine triphosphate) and ITP. Seems to function as a house-cleaning enzyme that removes non-canonical purine nucleotides from the nucleotide pool, thus preventing their incorporation into DNA/RNA and avoiding chromosomal lesions. The sequence is that of dITP/XTP pyrophosphatase from Acinetobacter baylyi (strain ATCC 33305 / BD413 / ADP1).